We begin with the raw amino-acid sequence, 312 residues long: Ribosomal RNA small subunit methyltransferase H (312 aa).

S-adenosyl-L-methionine contacts are provided by residues 32-34 (AGH), aspartate 52, phenylalanine 79, aspartate 100, and glutamine 107.

This sequence belongs to the methyltransferase superfamily. RsmH family.

It localises to the cytoplasm. The catalysed reaction is cytidine(1402) in 16S rRNA + S-adenosyl-L-methionine = N(4)-methylcytidine(1402) in 16S rRNA + S-adenosyl-L-homocysteine + H(+). Functionally, specifically methylates the N4 position of cytidine in position 1402 (C1402) of 16S rRNA. The sequence is that of Ribosomal RNA small subunit methyltransferase H from Listeria monocytogenes serotype 4b (strain CLIP80459).